The chain runs to 122 residues: Large ribosomal subunit protein uL14 (122 aa).

Belongs to the universal ribosomal protein uL14 family. Part of the 50S ribosomal subunit. Forms a cluster with proteins L3 and L19. In the 70S ribosome, L14 and L19 interact and together make contacts with the 16S rRNA in bridges B5 and B8.

In terms of biological role, binds to 23S rRNA. Forms part of two intersubunit bridges in the 70S ribosome. This Stenotrophomonas maltophilia (strain R551-3) protein is Large ribosomal subunit protein uL14.